Here is a 267-residue protein sequence, read N- to C-terminus: Centromere protein Q (267 aa).

Basic residues-rich tracts occupy residues 1 to 22 (MSGKARASRKKPQQVKRSLKQR) and 39 to 49 (KRNRSHAKHLS). Residues 1–54 (MSGKARASRKKPQQVKRSLKQRANKEADLPENEVGNTAKRNRSHAKHLSSKVTG) are disordered. Residue Ser49 is modified to Phosphoserine. A coiled-coil region spans residues 100–202 (IKRKEEIQCH…EEQEVKQVFH (103 aa)).

This sequence belongs to the CENP-Q/OKP1 family. Component of the CENPA-CAD complex, composed of CENPI, CENPK, CENPL, CENPO, CENPP, CENPQ, CENPR and CENPS. The CENPA-CAD complex interacts with the CENPA-NAC complex, at least composed of CENPA, CENPC, CENPH, CENPM, CENPN, CENPT and CENPU. In terms of processing, phosphorylation at Ser-49 is essential for CENPE recruitment to kinetochores and orderly chromosome congression.

The protein resides in the nucleus. It is found in the chromosome. It localises to the centromere. Its function is as follows. Component of the CENPA-CAD (nucleosome distal) complex, a complex recruited to centromeres which is involved in assembly of kinetochore proteins, mitotic progression and chromosome segregation. May be involved in incorporation of newly synthesized CENPA into centromeres via its interaction with the CENPA-NAC complex. Plays an important role in chromosome congression and in the recruitment of CENP-O complex (which comprises CENPO, CENPP, CENPQ and CENPU), CENPE and PLK1 to the kinetochores. In Mus musculus (Mouse), this protein is Centromere protein Q (Cenpq).